We begin with the raw amino-acid sequence, 277 residues long: Ribosomal RNA small subunit methyltransferase A (277 aa).

S-adenosyl-L-methionine-binding residues include histidine 20, leucine 22, glycine 47, glutamate 71, aspartate 94, and asparagine 116.

Belongs to the class I-like SAM-binding methyltransferase superfamily. rRNA adenine N(6)-methyltransferase family. RsmA subfamily.

The protein resides in the cytoplasm. It carries out the reaction adenosine(1518)/adenosine(1519) in 16S rRNA + 4 S-adenosyl-L-methionine = N(6)-dimethyladenosine(1518)/N(6)-dimethyladenosine(1519) in 16S rRNA + 4 S-adenosyl-L-homocysteine + 4 H(+). Its function is as follows. Specifically dimethylates two adjacent adenosines (A1518 and A1519) in the loop of a conserved hairpin near the 3'-end of 16S rRNA in the 30S particle. May play a critical role in biogenesis of 30S subunits. The chain is Ribosomal RNA small subunit methyltransferase A from Burkholderia sp.